A 478-amino-acid chain; its full sequence is Phosphatidylinositol 4-kinase type 2-alpha (478 aa).

The residue at position 1 (Met1) is an N-acetylmethionine. Residues 1-57 (MDETSPLVSPERAQPPEYTFPSVSGAHFPQVPGGAVRVAAAGSGPSPPCSPGHDRER) form a disordered region. 5 positions are modified to phosphoserine: Ser5, Ser9, Ser43, Ser46, and Ser50. Low complexity predominate over residues 31–44 (VPGGAVRVAAAGSG). The 330-residue stretch at 123–452 (SIYPERIYQG…VQMPPVIVET (330 aa)) folds into the PI3K/PI4K catalytic domain. The interval 129–135 (IYQGSSG) is G-loop. Residues 130 to 136 (YQGSSGS) and Lys151 each bind ATP. The interval 156-158 (EPY) is important for substrate binding. An important for interaction with membranes region spans residues 164–177 (KWTKWLQKLCCPCC). 4 S-palmitoyl cysteine lipidation sites follow: Cys173, Cys174, Cys176, and Cys177. ATP is bound at residue 260 to 263 (QLFV). The segment at 267 to 275 (KDADYWLRR) is important for interaction with membranes. Positions 304-312 (RNTDRGNDN) are catalytic loop. Residues 343–363 (AIDNGLAFPLKHPDSWRAYPF) form an activation loop region. Asp345 contacts ATP. Residues 358-367 (WRAYPFYWAW) are important for interaction with membranes. Ser461 bears the Phosphoserine mark.

The protein belongs to the PI3/PI4-kinase family. Type II PI4K subfamily. Associates with the BLOC-1 and the AP-3 complexes; the BLOC-1 complex is required for optimal binding of PI4K2A to the AP-3 complex. Interacts with BLOC1S5 and DTNBP1. Interacts with FOS; this interaction may enhance phosphatidylinositol phosphorylation activity. Interacts with ITCH. Interacts with ATG9A. Post-translationally, ubiquitinated by ITCH; this does not lead to proteasomal degradation. Palmitoylated. Palmitoylated by ZDHHC3 and ZDHHC7 in the CCPCC motif. Palmitoylation is cholesterol-dependent, and required for TGN localization. In terms of tissue distribution, detected in adult brain, especially in neurons in the cerebellum, brain cortex, dorsal root ganglion and spinal cord (at protein level).

It is found in the golgi apparatus. The protein localises to the trans-Golgi network membrane. Its subcellular location is the membrane raft. It localises to the endosome. The protein resides in the endosome membrane. It is found in the cytoplasmic vesicle. The protein localises to the cell projection. Its subcellular location is the dendrite. It localises to the presynaptic cell membrane. The protein resides in the synapse. It is found in the synaptosome. The protein localises to the mitochondrion. Its subcellular location is the membrane. It localises to the cell membrane. The protein resides in the perikaryon. It is found in the neuron projection. The catalysed reaction is a 1,2-diacyl-sn-glycero-3-phospho-(1D-myo-inositol) + ATP = a 1,2-diacyl-sn-glycero-3-phospho-(1D-myo-inositol 4-phosphate) + ADP + H(+). Its function is as follows. Membrane-bound phosphatidylinositol-4 kinase (PI4-kinase) that catalyzes the phosphorylation of phosphatidylinositol (PI) to phosphatidylinositol 4-phosphate (PI4P), a lipid that plays important roles in endocytosis, Golgi function, protein sorting and membrane trafficking and is required for prolonged survival of neurons. Besides, phosphorylation of phosphatidylinositol (PI) to phosphatidylinositol 4-phosphate (PI4P) is the first committed step in the generation of phosphatidylinositol 4,5-bisphosphate (PIP2), a precursor of the second messenger inositol 1,4,5-trisphosphate (InsP3). The protein is Phosphatidylinositol 4-kinase type 2-alpha (Pi4k2a) of Rattus norvegicus (Rat).